A 145-amino-acid chain; its full sequence is Flagellar assembly factor FliW (145 aa).

The protein belongs to the FliW family. In terms of assembly, interacts with translational regulator CsrA and flagellin(s).

It localises to the cytoplasm. Its function is as follows. Acts as an anti-CsrA protein, binds CsrA and prevents it from repressing translation of its target genes, one of which is flagellin. Binds to flagellin and participates in the assembly of the flagellum. The chain is Flagellar assembly factor FliW from Anoxybacillus flavithermus (strain DSM 21510 / WK1).